Reading from the N-terminus, the 343-residue chain is Ubiquitin thioesterase OTU1 (343 aa).

Residues 45–123 (RCKAKGGTHL…IVEEDQTRPK (79 aa)) form a UBX-like region. The 126-residue stretch at 144–269 (LTRTAVPADN…GIHYDPLQRN (126 aa)) folds into the OTU domain. Residues 149–155 (VPADNSC) are cys-loop. Aspartate 152 is an active-site residue. The Nucleophile role is filled by cysteine 155. The interval 208–218 (IRRDDTWGGAI) is variable-loop. Residues 258–262 (YDGIH) are his-loop. Isoleucine 261 is a substrate binding site. The active site involves histidine 262. Residues 286–291 (DIVLVQ) form an S2 site region. The C2H2-type zinc finger occupies 313–337 (LRCMICQKGLTGQAEARDHARETGH). Residue histidine 337 is part of the active site.

As to quaternary structure, interacts with VCP; the interaction is direct. Interacts with FAF2/UBXD8. Interacts with DERL1; however interaction is dependent on the UBAX-like region, suggesting that it may be indirect. Interacts with PLAA, UBXN6 and VCP; may form a complex involved in macroautophagy.

It localises to the cytoplasm. It carries out the reaction Thiol-dependent hydrolysis of ester, thioester, amide, peptide and isopeptide bonds formed by the C-terminal Gly of ubiquitin (a 76-residue protein attached to proteins as an intracellular targeting signal).. Functionally, hydrolase that can remove conjugated ubiquitin from proteins and participates in endoplasmic reticulum-associated degradation (ERAD) for misfolded lumenal proteins. May act by triming the ubiquitin chain on the associated substrate to facilitate their threading through the VCP/p97 pore. Ubiquitin moieties on substrates may present a steric impediment to the threading process when the substrate is transferred to the VCP pore and threaded through VCP's axial channel. Mediates deubiquitination of 'Lys-27'-, 'Lys-29'- and 'Lys-33'-linked polyubiquitin chains. Also able to hydrolyze 'Lys-11'-linked ubiquitin chains. Cleaves both polyubiquitin and di-ubiquitin. May play a role in macroautophagy, regulating for instance the clearance of damaged lysosomes. May recruit PLAA, UBXN6 and VCP to damaged lysosome membranes decorated with K48-linked ubiquitin chains and remove these chains allowing autophagosome formation. The chain is Ubiquitin thioesterase OTU1 (Yod1) from Mus musculus (Mouse).